The primary structure comprises 586 residues: Pyruvate kinase (586 aa).

Arginine 32 contacts substrate. Residues asparagine 34, serine 36, aspartate 66, and threonine 67 each coordinate K(+). 34 to 37 (NFSH) is an ATP binding site. 2 residues coordinate ATP: arginine 73 and lysine 156. Glutamate 222 serves as a coordination point for Mg(2+). 3 residues coordinate substrate: glycine 245, aspartate 246, and threonine 278. Position 246 (aspartate 246) interacts with Mg(2+).

It belongs to the pyruvate kinase family. The protein in the C-terminal section; belongs to the PEP-utilizing enzyme family. Homotetramer. It depends on Mg(2+) as a cofactor. The cofactor is K(+).

The enzyme catalyses pyruvate + ATP = phosphoenolpyruvate + ADP + H(+). It functions in the pathway carbohydrate degradation; glycolysis; pyruvate from D-glyceraldehyde 3-phosphate: step 5/5. In Sporosarcina psychrophila (Bacillus psychrophilus), this protein is Pyruvate kinase (pyk).